We begin with the raw amino-acid sequence, 198 residues long: Charged multivesicular body protein 1a (198 aa).

Coiled-coil stretches lie at residues 7-41 (QLKF…QQKN) and 176-198 (GETS…ALRN). The segment at 171-198 (GASALGETSARAQEKEDQLSRRLAALRN) is disordered. Positions 187-197 (DQLSRRLAALR) match the MIT-interacting motif motif.

Belongs to the SNF7 family. Probable peripherally associated component of the endosomal sorting required for transport complex III (ESCRT-III).

Its subcellular location is the cytoplasm. It localises to the endosome membrane. Its function is as follows. Probable peripherally associated component of the endosomal sorting required for transport complex III (ESCRT-III) which is involved in multivesicular bodies (MVBs) formation and sorting of endosomal cargo proteins into MVBs. MVBs contain intraluminal vesicles (ILVs) that are generated by invagination and scission from the limiting membrane of the endosome and mostly are delivered to lysosomes enabling degradation of membrane proteins, such as stimulated growth factor receptors, lysosomal enzymes and lipids. This is Charged multivesicular body protein 1a (chmp1a) from Danio rerio (Zebrafish).